Consider the following 595-residue polypeptide: Protein alan shepard (595 aa).

Residues 1–12 (MHPRYSPAPPPH) show a composition bias toward pro residues. The interval 1-82 (MHPRYSPAPP…ASVAAAPPTP (82 aa)) is disordered. Residue Tyr-5 is modified to Phosphotyrosine. Positions 13 to 31 (QQQQQQQQQPMGGPHQQQS) are enriched in low complexity. Residues 32-43 (AGGGPGHGGGAS) show a composition bias toward gly residues. Polar residues predominate over residues 50–68 (PNSQQLPPQMPRSQNYANG). Over residues 69-78 (SSSAASVAAA) the composition is skewed to low complexity. Phosphotyrosine occurs at positions 138 and 154. The segment at 184-238 (RVPTAASPSNTNSSSSSNTGSQSGTLSTSLSNTTNTNTTMGPNGTAQNQNQQGGE) is disordered. The span at 190–238 (SPSNTNSSSSSNTGSQSGTLSTSLSNTTNTNTTMGPNGTAQNQNQQGGE) shows a compositional bias: low complexity. RRM domains lie at 243–316 (TNLY…MAKQ) and 322–401 (TNLY…FADG). The disordered stretch occupies residues 569–595 (MTDSEQASTAASPDEAYTQYPHQAAPK).

Functionally, has a role in the perception of gravity. This is Protein alan shepard from Drosophila virilis (Fruit fly).